The primary structure comprises 402 residues: MFVPRQLNVRKIKAFTGKENNSIADGNNNKLKDEHYKHNEASKEPSHSISGGLMLNQQDRQLIEPLNPDFLSAVDSILEIYFHRERQKEKVHLAFLIQQDDFWKGIRPNPTQNNLKYALSYVTNALFHFDNSSHMVIRNENIVLPLDIPLYDRIIYVEPVPATLSNKSLLLAGKLRKYLKEFLPYVDAIGTPEGYAFVILYKKVDQSALSKLPVPPGWVLLTRKEWTNREEKYFENQLHLVKASSSDVSNSSNSFPENRYPKLTKVEKQMTKSVSKTSQTDKDEDNLDFTKNLLTRIKNLHPLTNKSTIHSLLSYVFSRQTQNIACEPMYIDYRKDETEAIIRWKTPLHAETCINAFRTQERKQNSHDDIRAHRKKGSSRPFLIAELITGEEEKNYWRMLKK.

The HTH La-type RNA-binding-like region stretch occupies residues 64-138; it reads EPLNPDFLSA…FDNSSHMVIR (75 aa). The segment at 148–230 is RRM-like region; that stretch reads IPLYDRIIYV…LTRKEWTNRE (83 aa). The xRRM-like region stretch occupies residues 288–400; that stretch reads DFTKNLLTRI…EEEKNYWRML (113 aa). The xRRM domain maps to 288 to 402; sequence DFTKNLLTRI…EKNYWRMLKK (115 aa).

It belongs to the LARP7 family. Component of the telomerase holoenzyme complex composed minimally of trt1 and the telomerase RNA template component. Interacts with skp1.

It localises to the chromosome. The protein localises to the telomere. Its subcellular location is the nucleus. It is found in the cytoplasm. Its function is as follows. RNA-binding protein required for assembly of the holoenzyme telomerase ribonucleoprotein (RNP) complex. Specifically binds telomerase RNA ter1 and promotes assembly of ter1 with catalytic subunit trt1. Telomerase is a ribonucleoprotein enzyme essential that copies new telomeric repeats onto chromosome ends and functions to maintain cell division. The protein is La-related protein 7 homolog of Schizosaccharomyces pombe (strain 972 / ATCC 24843) (Fission yeast).